The following is a 497-amino-acid chain: tRNA-2-methylthio-N(6)-dimethylallyladenosine synthase (497 aa).

The MTTase N-terminal domain maps to Arg4–His120. [4Fe-4S] cluster-binding residues include Cys13, Cys49, Cys83, Cys157, Cys161, and Cys164. Residues Arg143–Gln374 form the Radical SAM core domain. Positions Arg376–Leu445 constitute a TRAM domain.

This sequence belongs to the methylthiotransferase family. MiaB subfamily. In terms of assembly, monomer. [4Fe-4S] cluster serves as cofactor.

Its subcellular location is the cytoplasm. It carries out the reaction N(6)-dimethylallyladenosine(37) in tRNA + (sulfur carrier)-SH + AH2 + 2 S-adenosyl-L-methionine = 2-methylsulfanyl-N(6)-dimethylallyladenosine(37) in tRNA + (sulfur carrier)-H + 5'-deoxyadenosine + L-methionine + A + S-adenosyl-L-homocysteine + 2 H(+). In terms of biological role, catalyzes the methylthiolation of N6-(dimethylallyl)adenosine (i(6)A), leading to the formation of 2-methylthio-N6-(dimethylallyl)adenosine (ms(2)i(6)A) at position 37 in tRNAs that read codons beginning with uridine. The sequence is that of tRNA-2-methylthio-N(6)-dimethylallyladenosine synthase from Frankia alni (strain DSM 45986 / CECT 9034 / ACN14a).